The chain runs to 312 residues: Oxidoreductase NAD-binding domain-containing protein 1 (312 aa).

The signal sequence occupies residues 1-17 (MACAAVMIPGLLRCSVG). The region spanning 50–186 (HMERTASVLR…GGVGINPLLS (137 aa)) is the FAD-binding FR-type domain. Residue 178–183 (GVGINP) participates in NAD(+) binding.

The chain is Oxidoreductase NAD-binding domain-containing protein 1 (OXNAD1) from Homo sapiens (Human).